The following is a 291-amino-acid chain: tRNA U34 carboxymethyltransferase (291 aa).

Residues Lys61, Trp75, Lys80, Gly100, 122 to 124 (DPS), 149 to 150 (VE), Tyr169, and Arg284 each bind carboxy-S-adenosyl-L-methionine.

The protein belongs to the class I-like SAM-binding methyltransferase superfamily. CmoB family. In terms of assembly, homotetramer.

The catalysed reaction is carboxy-S-adenosyl-L-methionine + 5-hydroxyuridine(34) in tRNA = 5-carboxymethoxyuridine(34) in tRNA + S-adenosyl-L-homocysteine + H(+). Its function is as follows. Catalyzes carboxymethyl transfer from carboxy-S-adenosyl-L-methionine (Cx-SAM) to 5-hydroxyuridine (ho5U) to form 5-carboxymethoxyuridine (cmo5U) at position 34 in tRNAs. The polypeptide is tRNA U34 carboxymethyltransferase (Campylobacter jejuni subsp. doylei (strain ATCC BAA-1458 / RM4099 / 269.97)).